The sequence spans 398 residues: Chorismate synthase (398 aa).

Positions 44 and 50 each coordinate NADP(+). Residues 133-135 (RAS), 261-262 (QA), glycine 306, 321-325 (KPIPT), and arginine 347 contribute to the FMN site.

It belongs to the chorismate synthase family. In terms of assembly, homotetramer. FMNH2 serves as cofactor.

The catalysed reaction is 5-O-(1-carboxyvinyl)-3-phosphoshikimate = chorismate + phosphate. Its pathway is metabolic intermediate biosynthesis; chorismate biosynthesis; chorismate from D-erythrose 4-phosphate and phosphoenolpyruvate: step 7/7. Functionally, catalyzes the anti-1,4-elimination of the C-3 phosphate and the C-6 proR hydrogen from 5-enolpyruvylshikimate-3-phosphate (EPSP) to yield chorismate, which is the branch point compound that serves as the starting substrate for the three terminal pathways of aromatic amino acid biosynthesis. This reaction introduces a second double bond into the aromatic ring system. The polypeptide is Chorismate synthase (Aquifex aeolicus (strain VF5)).